Here is a 427-residue protein sequence, read N- to C-terminus: Trigger factor (427 aa).

The PPIase FKBP-type domain maps to 163–248 (GDTVVIDFVG…IHEVKEKEVP (86 aa)).

Belongs to the FKBP-type PPIase family. Tig subfamily.

The protein resides in the cytoplasm. It carries out the reaction [protein]-peptidylproline (omega=180) = [protein]-peptidylproline (omega=0). Functionally, involved in protein export. Acts as a chaperone by maintaining the newly synthesized protein in an open conformation. Functions as a peptidyl-prolyl cis-trans isomerase. This is Trigger factor from Streptococcus sanguinis (strain SK36).